A 188-amino-acid polypeptide reads, in one-letter code: Pyridoxal 5'-phosphate synthase subunit PdxT (188 aa).

46 to 48 (GES) lines the L-glutamine pocket. Cysteine 78 functions as the Nucleophile in the catalytic mechanism. L-glutamine-binding positions include arginine 105 and 134–135 (IR). Active-site charge relay system residues include histidine 170 and glutamate 172.

This sequence belongs to the glutaminase PdxT/SNO family. In the presence of PdxS, forms a dodecamer of heterodimers. Only shows activity in the heterodimer.

The catalysed reaction is aldehydo-D-ribose 5-phosphate + D-glyceraldehyde 3-phosphate + L-glutamine = pyridoxal 5'-phosphate + L-glutamate + phosphate + 3 H2O + H(+). It carries out the reaction L-glutamine + H2O = L-glutamate + NH4(+). Its pathway is cofactor biosynthesis; pyridoxal 5'-phosphate biosynthesis. Its function is as follows. Catalyzes the hydrolysis of glutamine to glutamate and ammonia as part of the biosynthesis of pyridoxal 5'-phosphate. The resulting ammonia molecule is channeled to the active site of PdxS. The polypeptide is Pyridoxal 5'-phosphate synthase subunit PdxT (Moorella thermoacetica (strain ATCC 39073 / JCM 9320)).